The primary structure comprises 435 residues: Adenylosuccinate synthetase (435 aa).

GTP contacts are provided by residues 20-26 (GDEGKGK) and 48-50 (GHT). D21 (proton acceptor) is an active-site residue. Mg(2+) is bound by residues D21 and G48. Residues 21 to 24 (DEGK), 46 to 49 (NAGH), T134, R148, Q229, T244, and R308 each bind IMP. H49 serves as the catalytic Proton donor. 304–310 (TTTGRPR) lines the substrate pocket. GTP-binding positions include R310, 336–338 (KVD), and 422–424 (SMG).

This sequence belongs to the adenylosuccinate synthetase family. As to quaternary structure, homodimer. It depends on Mg(2+) as a cofactor.

The protein localises to the cytoplasm. The catalysed reaction is IMP + L-aspartate + GTP = N(6)-(1,2-dicarboxyethyl)-AMP + GDP + phosphate + 2 H(+). Its pathway is purine metabolism; AMP biosynthesis via de novo pathway; AMP from IMP: step 1/2. In terms of biological role, plays an important role in the de novo pathway of purine nucleotide biosynthesis. Catalyzes the first committed step in the biosynthesis of AMP from IMP. This Thermoplasma acidophilum (strain ATCC 25905 / DSM 1728 / JCM 9062 / NBRC 15155 / AMRC-C165) protein is Adenylosuccinate synthetase.